A 335-amino-acid polypeptide reads, in one-letter code: Anthranilate phosphoribosyltransferase (335 aa).

5-phospho-alpha-D-ribose 1-diphosphate-binding positions include Gly-79, 82–83 (GD), Ser-87, 89–92 (NIST), 107–115 (KHGNRSITS), and Ser-119. Gly-79 is an anthranilate binding site. A Mg(2+)-binding site is contributed by Ser-91. Anthranilate is bound at residue Asn-110. Arg-165 is an anthranilate binding site. Mg(2+) contacts are provided by Asp-224 and Glu-225.

It belongs to the anthranilate phosphoribosyltransferase family. In terms of assembly, homodimer. Mg(2+) is required as a cofactor.

It catalyses the reaction N-(5-phospho-beta-D-ribosyl)anthranilate + diphosphate = 5-phospho-alpha-D-ribose 1-diphosphate + anthranilate. It functions in the pathway amino-acid biosynthesis; L-tryptophan biosynthesis; L-tryptophan from chorismate: step 2/5. In terms of biological role, catalyzes the transfer of the phosphoribosyl group of 5-phosphorylribose-1-pyrophosphate (PRPP) to anthranilate to yield N-(5'-phosphoribosyl)-anthranilate (PRA). This chain is Anthranilate phosphoribosyltransferase, found in Lactococcus lactis subsp. cremoris (strain MG1363).